The chain runs to 520 residues: Hydroxymethylglutaryl-CoA synthase, cytoplasmic (520 aa).

Residue Ser4 is modified to Phosphoserine. (3S)-3-hydroxy-3-methylglutaryl-CoA contacts are provided by Asp43 and Ala44. Residue 44–46 coordinates CoA; sequence AGK. Lys46 is subject to N6-acetyllysine. The active-site Proton donor/acceptor is Glu95. Residues Cys129, Asn167, Thr171, Ser221, and His264 each coordinate (3S)-3-hydroxy-3-methylglutaryl-CoA. The active-site Acyl-thioester intermediate is Cys129. Residue Asn167 participates in CoA binding. CoA is bound at residue Ser221. The Proton donor/acceptor role is filled by His264. Residues Lys269 and Lys273 each coordinate CoA. Residues Lys273, Asn343, and Ser377 each coordinate (3S)-3-hydroxy-3-methylglutaryl-CoA. Lys273 carries the post-translational modification N6-acetyllysine. Residues 488–520 are disordered; the sequence is TATEHIPSPAKKVPRLPATSAESESAVISNGEH. Phosphoserine is present on residues Ser495 and Ser516. Polar residues predominate over residues 507–520; that stretch reads SAESESAVISNGEH.

The protein belongs to the thiolase-like superfamily. HMG-CoA synthase family. Homodimer.

It is found in the cytoplasm. It carries out the reaction acetoacetyl-CoA + acetyl-CoA + H2O = (3S)-3-hydroxy-3-methylglutaryl-CoA + CoA + H(+). It participates in metabolic intermediate biosynthesis; (R)-mevalonate biosynthesis; (R)-mevalonate from acetyl-CoA: step 2/3. Functionally, catalyzes the condensation of acetyl-CoA with acetoacetyl-CoA to form HMG-CoA, which is converted by HMG-CoA reductase (HMGCR) into mevalonate, a precursor for cholesterol synthesis. In Mus musculus (Mouse), this protein is Hydroxymethylglutaryl-CoA synthase, cytoplasmic.